We begin with the raw amino-acid sequence, 105 residues long: Large ribosomal subunit protein uL24 (105 aa).

Belongs to the universal ribosomal protein uL24 family. As to quaternary structure, part of the 50S ribosomal subunit.

In terms of biological role, one of two assembly initiator proteins, it binds directly to the 5'-end of the 23S rRNA, where it nucleates assembly of the 50S subunit. Its function is as follows. One of the proteins that surrounds the polypeptide exit tunnel on the outside of the subunit. The sequence is that of Large ribosomal subunit protein uL24 from Clostridium botulinum (strain 657 / Type Ba4).